The sequence spans 361 residues: Deoxyhypusine hydroxylase (361 aa).

HEAT-like PBS-type repeat units follow at residues 59–85, 94–120, 183–211, and 216–242; these read LKHE…VLEN, VRHE…YMQD, QRYR…GFRD, and FRHE…RLRD. 4 residues coordinate Fe cation: H61, E62, H96, and E97. Residues H218, E219, H251, and E252 each coordinate Fe cation.

It belongs to the deoxyhypusine hydroxylase family. Requires Fe(2+) as cofactor.

The protein localises to the cytoplasm. It localises to the nucleus. It carries out the reaction [eIF5A protein]-deoxyhypusine + AH2 + O2 = [eIF5A protein]-hypusine + A + H2O. The protein operates within protein modification; eIF5A hypusination. Its function is as follows. Catalyzes the hydroxylation of the N(6)-(4-aminobutyl)-L-lysine intermediate to form hypusine, an essential post-translational modification only found in mature eIF-5A factor. This Cryptococcus neoformans var. neoformans serotype D (strain B-3501A) (Filobasidiella neoformans) protein is Deoxyhypusine hydroxylase.